Consider the following 134-residue polypeptide: Small ribosomal subunit protein uS12 (134 aa).

A 3-methylthioaspartic acid modification is found at aspartate 89. Residues 101-134 (TLDASGVNGRNQSRSKYGTKRPKPGQAAAGGKKK) form a disordered region. Residues 125 to 134 (GQAAAGGKKK) show a composition bias toward low complexity.

The protein belongs to the universal ribosomal protein uS12 family. As to quaternary structure, part of the 30S ribosomal subunit. Contacts proteins S8 and S17. May interact with IF1 in the 30S initiation complex.

With S4 and S5 plays an important role in translational accuracy. Functionally, interacts with and stabilizes bases of the 16S rRNA that are involved in tRNA selection in the A site and with the mRNA backbone. Located at the interface of the 30S and 50S subunits, it traverses the body of the 30S subunit contacting proteins on the other side and probably holding the rRNA structure together. The combined cluster of proteins S8, S12 and S17 appears to hold together the shoulder and platform of the 30S subunit. This chain is Small ribosomal subunit protein uS12, found in Gemmatimonas aurantiaca (strain DSM 14586 / JCM 11422 / NBRC 100505 / T-27).